The primary structure comprises 349 residues: Isopentenyl-diphosphate delta-isomerase (349 aa).

Residue 8-9 coordinates substrate; that stretch reads RK. FMN is bound by residues Ser66, 67–69, Ser97, and Asn125; that span reads SMT. Substrate is bound at residue 97–99; it reads STR. A substrate-binding site is contributed by Gln160. Glu161 is a binding site for Mg(2+). FMN contacts are provided by residues Lys192, Thr222, 272 to 274, and 293 to 294; these read GMK and AR.

The protein belongs to the IPP isomerase type 2 family. Homooctamer. Dimer of tetramers. Requires FMN as cofactor. The cofactor is NADPH. It depends on Mg(2+) as a cofactor.

The protein resides in the cytoplasm. It carries out the reaction isopentenyl diphosphate = dimethylallyl diphosphate. Involved in the biosynthesis of isoprenoids. Catalyzes the 1,3-allylic rearrangement of the homoallylic substrate isopentenyl (IPP) to its allylic isomer, dimethylallyl diphosphate (DMAPP). This chain is Isopentenyl-diphosphate delta-isomerase, found in Oceanobacillus iheyensis (strain DSM 14371 / CIP 107618 / JCM 11309 / KCTC 3954 / HTE831).